The sequence spans 427 residues: Serine hydroxymethyltransferase (427 aa).

Residues leucine 118 and 122 to 124 (GHL) each bind (6S)-5,6,7,8-tetrahydrofolate. Lysine 227 is subject to N6-(pyridoxal phosphate)lysine. 351 to 353 (SPF) contacts (6S)-5,6,7,8-tetrahydrofolate.

The protein belongs to the SHMT family. As to quaternary structure, homodimer. It depends on pyridoxal 5'-phosphate as a cofactor.

The protein resides in the cytoplasm. The enzyme catalyses (6R)-5,10-methylene-5,6,7,8-tetrahydrofolate + glycine + H2O = (6S)-5,6,7,8-tetrahydrofolate + L-serine. It functions in the pathway one-carbon metabolism; tetrahydrofolate interconversion. The protein operates within amino-acid biosynthesis; glycine biosynthesis; glycine from L-serine: step 1/1. Its function is as follows. Catalyzes the reversible interconversion of serine and glycine with tetrahydrofolate (THF) serving as the one-carbon carrier. This reaction serves as the major source of one-carbon groups required for the biosynthesis of purines, thymidylate, methionine, and other important biomolecules. Also exhibits THF-independent aldolase activity toward beta-hydroxyamino acids, producing glycine and aldehydes, via a retro-aldol mechanism. The chain is Serine hydroxymethyltransferase from Thermotoga petrophila (strain ATCC BAA-488 / DSM 13995 / JCM 10881 / RKU-1).